A 447-amino-acid chain; its full sequence is Alpha-1,3-mannosyl-glycoprotein 2-beta-N-acetylglucosaminyltransferase (447 aa).

Residues 1 to 6 (MLKKQT) are Cytoplasmic-facing. Residues 7-29 (AGLVLWGAIIFVGWNALLLLFFW) form a helical; Signal-anchor for type II membrane protein membrane-spanning segment. Over 30–447 (TRPAPGRLPS…TWTGYDPSWN (418 aa)) the chain is Lumenal. Cys115 and Cys145 are joined by a disulfide. Residues Arg117, Asp144, His190, and Asp212 each contribute to the substrate site. Mn(2+) is bound at residue Asp213. A disulfide bond links Cys239 and Cys305. Asp291 functions as the Proton acceptor in the catalytic mechanism. A substrate-binding site is contributed by Ser322.

Belongs to the glycosyltransferase 13 family. Interacts with MGAT4D. Interacts with BRI3. Mn(2+) serves as cofactor. Detected in kidney, liver and brain.

Its subcellular location is the golgi apparatus membrane. It localises to the cytoplasm. The protein resides in the perinuclear region. It catalyses the reaction N(4)-(alpha-D-Man-(1-&gt;3)-[alpha-D-Man-(1-&gt;3)-[alpha-D-Man-(1-&gt;6)]-alpha-D-Man-(1-&gt;6)]-beta-D-Man-(1-&gt;4)-beta-D-GlcNAc-(1-&gt;4)-beta-D-GlcNAc)-L-asparaginyl-[protein] (N-glucan mannose isomer 5A1,2) + UDP-N-acetyl-alpha-D-glucosamine = N(4)-{beta-D-GlcNAc-(1-&gt;2)-alpha-D-Man-(1-&gt;3)-[alpha-D-Man-(1-&gt;3)-[alpha-D-Man-(1-&gt;6)]-alpha-D-Man-(1-&gt;6)]-beta-D-Man-(1-&gt;4)-beta-D-GlcNAc-(1-&gt;4)-beta-D-GlcNAc}-L-asparaginyl-[protein] + UDP + H(+). It participates in protein modification; protein glycosylation. Initiates complex N-linked carbohydrate formation. Essential for the conversion of high-mannose to hybrid and complex N-glycans. This Mus musculus (Mouse) protein is Alpha-1,3-mannosyl-glycoprotein 2-beta-N-acetylglucosaminyltransferase (Mgat1).